The primary structure comprises 512 residues: Kelch repeat protein C2 (512 aa).

Residues 2–67 enclose the BTB domain; sequence ESVIFSINGE…MRWKKINITI (66 aa). Residues 102-176 enclose the BACK domain; the sequence is CIRMFNFSKR…LLKWIHKNPN (75 aa). Kelch repeat units follow at residues 216 to 261, 262 to 307, 309 to 354, 356 to 403, 405 to 449, and 452 to 498; these read IKHN…LHNC, LYII…VNNG, LYVI…FVND, IYVM…EYDG, IYVI…SCGD, and LIIA…THKS.

This sequence belongs to the poxviruses Kelch family.

In Rabbitpox virus (strain Utrecht) (RPV), this protein is Kelch repeat protein C2.